The following is a 591-amino-acid chain: Protein misato homolog 1 (591 aa).

This sequence belongs to the misato family.

It localises to the mitochondrion outer membrane. Its subcellular location is the cytoplasm. In terms of biological role, involved in the regulation of mitochondrial distribution and morphology. Required for mitochondrial fusion and mitochondrial network formation. In Danio rerio (Zebrafish), this protein is Protein misato homolog 1 (msto1).